Reading from the N-terminus, the 346-residue chain is UDP-3-O-acylglucosamine N-acyltransferase (346 aa).

His240 functions as the Proton acceptor in the catalytic mechanism.

The protein belongs to the transferase hexapeptide repeat family. LpxD subfamily. As to quaternary structure, homotrimer.

It catalyses the reaction a UDP-3-O-[(3R)-3-hydroxyacyl]-alpha-D-glucosamine + a (3R)-hydroxyacyl-[ACP] = a UDP-2-N,3-O-bis[(3R)-3-hydroxyacyl]-alpha-D-glucosamine + holo-[ACP] + H(+). Its pathway is bacterial outer membrane biogenesis; LPS lipid A biosynthesis. Its function is as follows. Catalyzes the N-acylation of UDP-3-O-acylglucosamine using 3-hydroxyacyl-ACP as the acyl donor. Is involved in the biosynthesis of lipid A, a phosphorylated glycolipid that anchors the lipopolysaccharide to the outer membrane of the cell. This chain is UDP-3-O-acylglucosamine N-acyltransferase, found in Phocaeicola vulgatus (strain ATCC 8482 / DSM 1447 / JCM 5826 / CCUG 4940 / NBRC 14291 / NCTC 11154) (Bacteroides vulgatus).